A 524-amino-acid polypeptide reads, in one-letter code: Cytochrome P450 4F11 (524 aa).

A helical transmembrane segment spans residues 15 to 37 (AASPWLLLLLVGGSWLLARVLAW). Cysteine 45 and cysteine 260 each carry 4-hydroxynonenal-conjugated cysteine. Histidine 261 carries the 4-hydroxynonenal-conjugated histidine modification. Residue glutamate 328 participates in heme binding. A 4-hydroxynonenal-conjugated histidine modification is found at histidine 347. 4-hydroxynonenal-conjugated cysteine is present on cysteine 354. At lysine 451 the chain carries 4-hydroxynonenal-conjugated lysine. Cysteine 468 serves as a coordination point for heme.

The protein belongs to the cytochrome P450 family. It depends on heme as a cofactor. Post-translationally, 4-hydroxynonenal conjugation impairs substrate binding and the long-chain fatty acid omega-monooxygenase activity. In terms of tissue distribution, expressed mainly in human liver, followed by kidney, heart, and skeletal muscle.

Its subcellular location is the endoplasmic reticulum membrane. The protein localises to the microsome membrane. It carries out the reaction an organic molecule + reduced [NADPH--hemoprotein reductase] + O2 = an alcohol + oxidized [NADPH--hemoprotein reductase] + H2O + H(+). The catalysed reaction is an omega-methyl-long-chain fatty acid + reduced [NADPH--hemoprotein reductase] + O2 = an omega-hydroxy-long-chain fatty acid + oxidized [NADPH--hemoprotein reductase] + H2O + H(+). It catalyses the reaction dodecanoate + reduced [NADPH--hemoprotein reductase] + O2 = 12-hydroxydodecanoate + oxidized [NADPH--hemoprotein reductase] + H2O + H(+). The enzyme catalyses hexadecanoate + reduced [NADPH--hemoprotein reductase] + O2 = 16-hydroxyhexadecanoate + oxidized [NADPH--hemoprotein reductase] + H2O + H(+). It carries out the reaction (9Z)-octadecenoate + reduced [NADPH--hemoprotein reductase] + O2 = 18-hydroxy-(9Z)-octadecenoate + oxidized [NADPH--hemoprotein reductase] + H2O + H(+). The catalysed reaction is (5Z,8Z,11Z,14Z)-eicosatetraenoate + reduced [NADPH--hemoprotein reductase] + O2 = 20-hydroxy-(5Z,8Z,11Z,14Z)-eicosatetraenoate + oxidized [NADPH--hemoprotein reductase] + H2O + H(+). It catalyses the reaction (4Z,7Z,10Z,13Z,16Z,19Z)-docosahexaenoate + reduced [NADPH--hemoprotein reductase] + O2 = 22-hydroxy-(4Z,7Z,10Z,13Z,16Z,19Z)-docosahexaenoate + oxidized [NADPH--hemoprotein reductase] + H2O + H(+). The enzyme catalyses 8-hydroxy-(5Z,9E,11Z,14Z)-eicosatetraenoate + reduced [NADPH--hemoprotein reductase] + O2 = 8,20-dihydroxy-(5Z,9E,11Z,14Z)-eicosatetraenoate + oxidized [NADPH--hemoprotein reductase] + H2O + H(+). It carries out the reaction 3-hydroxyhexadecanoate + reduced [NADPH--hemoprotein reductase] + O2 = 3,16-dihydroxyhexadecanoate + oxidized [NADPH--hemoprotein reductase] + H2O + H(+). The catalysed reaction is 3-hydroxyoctadecanoate + reduced [NADPH--hemoprotein reductase] + O2 = 3,18-dihydroxyoctadecanoate + oxidized [NADPH--hemoprotein reductase] + H2O + H(+). It catalyses the reaction phylloquinone + reduced [NADPH--hemoprotein reductase] + O2 = omega-hydroxyphylloquinone + oxidized [NADPH--hemoprotein reductase] + H2O + H(+). The enzyme catalyses menaquinone-4 + reduced [NADPH--hemoprotein reductase] + O2 = omega-hydroxymenaquinone-4 + oxidized [NADPH--hemoprotein reductase] + H2O + H(+). It carries out the reaction 2-hexyl-5-pentylresorcinol + reduced [NADPH--hemoprotein reductase] + O2 = 2-hexyl-5-(5-hydroxypentyl)resorcinol + oxidized [NADPH--hemoprotein reductase] + H2O + H(+). The catalysed reaction is 2-hexyl-5-heptylresorcinol + reduced [NADPH--hemoprotein reductase] + O2 = 2-hexyl-5-(7-hydroxyheptyl)resorcinol + oxidized [NADPH--hemoprotein reductase] + H2O + H(+). It catalyses the reaction 12-hydroxy-(5Z,8Z,10E,14Z)-eicosatetraenoate + reduced [NADPH--hemoprotein reductase] + O2 = 12,20-dihydroxy-(5Z,8Z,10E,14Z)-eicosatetraenoate + oxidized [NADPH--hemoprotein reductase] + H2O + H(+). The enzyme catalyses 15-hydroxy-(5Z,8Z,11Z,13E)-eicosatetraenoate + reduced [NADPH--hemoprotein reductase] + O2 = 15,20-dihydroxy-(5Z,8Z,11Z,13E)-eicosatetraenoate + oxidized [NADPH--hemoprotein reductase] + H2O + H(+). The protein operates within lipid metabolism; arachidonate metabolism. Its pathway is lipid metabolism; oxylipin biosynthesis. It participates in cofactor degradation; phylloquinone degradation. It functions in the pathway xenobiotic degradation. With respect to regulation, inhibition of the long-chain fatty acid omega-monooxygenase activity by 4-hydroxynonenal (4-HNE) conjugation. In terms of biological role, a cytochrome P450 monooxygenase involved in the metabolism of various endogenous substrates, including fatty acids and their oxygenated derivatives (oxylipins). Mechanistically, uses molecular oxygen inserting one oxygen atom into a substrate, and reducing the second into a water molecule, with two electrons provided by NADPH via cytochrome P450 reductase (CPR; NADPH-ferrihemoprotein reductase). Catalyzes with high efficiency the oxidation of the terminal carbon (omega-oxidation) of 3-hydroxy fatty acids, such as 3-hydroxyhexadecanoic and 3-hydroxyoctadecanoic acids, likely participating in the biosynthesis of long-chain 3-hydroxydicarboxylic acids. Omega-hydroxylates and inactivates phylloquinone (vitamin K1), and menaquinone-4 (MK-4, a form of vitamin K2), both acting as cofactors in blood coagulation. Metabolizes with low efficiciency fatty acids, including (5Z,8Z,11Z,14Z)-eicosatetraenoic acid (arachidonate) and its oxygenated metabolite 8-hydroxyeicosatetraenoic acid (8-HETE). Catalyzes N- and O-demethylation of drugs such as erythromycin, benzphetamine, ethylmorphine, chlorpromazine, imipramine and verapamil. Catalyzes the oxidation of dialkylresorcinol 2. The polypeptide is Cytochrome P450 4F11 (Homo sapiens (Human)).